The sequence spans 455 residues: uncharacterized protein (455 aa).

N-linked (GlcNAc...) asparagine glycans are attached at residues Asn42, Asn49, and Asn70. Helical transmembrane passes span Ala127–Phe147, Ser153–Ile173, Ile177–Tyr197, and Tyr377–Phe397. Asn403 is a glycosylation site (N-linked (GlcNAc...) asparagine).

It localises to the membrane. This is an uncharacterized protein from Caenorhabditis elegans.